The sequence spans 72 residues: ATP synthase subunit c (72 aa).

Helical transmembrane passes span 5–25 (LLAA…IGIA) and 52–72 (GLSE…LFVV).

This sequence belongs to the ATPase C chain family. As to quaternary structure, F-type ATPases have 2 components, F(1) - the catalytic core - and F(0) - the membrane proton channel. F(1) has five subunits: alpha(3), beta(3), gamma(1), delta(1), epsilon(1). F(0) has three main subunits: a(1), b(2) and c(10-14). The alpha and beta chains form an alternating ring which encloses part of the gamma chain. F(1) is attached to F(0) by a central stalk formed by the gamma and epsilon chains, while a peripheral stalk is formed by the delta and b chains.

The protein localises to the cell membrane. Functionally, f(1)F(0) ATP synthase produces ATP from ADP in the presence of a proton or sodium gradient. F-type ATPases consist of two structural domains, F(1) containing the extramembraneous catalytic core and F(0) containing the membrane proton channel, linked together by a central stalk and a peripheral stalk. During catalysis, ATP synthesis in the catalytic domain of F(1) is coupled via a rotary mechanism of the central stalk subunits to proton translocation. In terms of biological role, key component of the F(0) channel; it plays a direct role in translocation across the membrane. A homomeric c-ring of between 10-14 subunits forms the central stalk rotor element with the F(1) delta and epsilon subunits. This Clostridium perfringens (strain SM101 / Type A) protein is ATP synthase subunit c.